The following is a 208-amino-acid chain: V-type ATP synthase subunit D (208 aa).

Belongs to the V-ATPase D subunit family.

Its function is as follows. Produces ATP from ADP in the presence of a proton gradient across the membrane. This Streptococcus pyogenes serotype M49 (strain NZ131) protein is V-type ATP synthase subunit D.